The primary structure comprises 509 residues: DNA primase large subunit (509 aa).

The segment at 253–270 (LSHSYTGQDYSTQGNVGK) is interdomain linker. The tract at residues 266 to 509 (GNVGKISLDQ…GLEDYFSEDS (244 aa)) is interacts with PRIM1. C287, C367, C384, and C424 together coordinate [4Fe-4S] cluster. The RNA:DNA duplex-binding stretch occupies residues 300-442 (HLRHGGRMQY…NVDDCGFSLN (143 aa)). A disordered region spans residues 461 to 486 (IKKEPIQPETPQPKPSVQKTKDASSA). Position 470 is a phosphothreonine (T470).

It belongs to the eukaryotic-type primase large subunit family. As to quaternary structure, heterodimer of a catalytic subunit PRIM1 and a regulatory subunit PRIM2, also known as the DNA primase complex. Interacts via (C-terminus) with PRIM1. Component of the alpha DNA polymerase complex (also known as the alpha DNA polymerase-primase complex) consisting of four subunits: the catalytic subunit POLA1, the regulatory subunit POLA2, and the primase complex subunits PRIM1 and PRIM2 respectively. Within the complex, POLA1 directly interacts with PRIM2. [4Fe-4S] cluster is required as a cofactor.

Functionally, regulatory subunit of the DNA primase complex and component of the DNA polymerase alpha complex (also known as the alpha DNA polymerase-primase complex) which play an essential role in the initiation of DNA synthesis. During the S phase of the cell cycle, the DNA polymerase alpha complex (composed of a catalytic subunit POLA1, an accessory subunit POLA2 and two primase subunits, the catalytic subunit PRIM1 and the regulatory subunit PRIM2) is recruited to DNA at the replicative forks via direct interactions with MCM10 and WDHD1. The primase subunit of the polymerase alpha complex initiates DNA synthesis by oligomerising short RNA primers on both leading and lagging strands. These primers are initially extended by the polymerase alpha catalytic subunit and subsequently transferred to polymerase delta and polymerase epsilon for processive synthesis on the lagging and leading strand, respectively. In the primase complex, both subunits are necessary for the initial di-nucleotide formation, but the extension of the primer depends only on the catalytic subunit. Binds RNA:DNA duplex and coordinates the catalytic activities of PRIM1 and POLA2 during primase-to-polymerase switch. The polypeptide is DNA primase large subunit (PRIM2) (Homo sapiens (Human)).